The primary structure comprises 72 residues: Translation initiation factor IF-1 (72 aa).

The S1-like domain occupies 1–72; sequence MAKEDSIEMQ…TKGRIIFRAR (72 aa).

Belongs to the IF-1 family. In terms of assembly, component of the 30S ribosomal translation pre-initiation complex which assembles on the 30S ribosome in the order IF-2 and IF-3, IF-1 and N-formylmethionyl-tRNA(fMet); mRNA recruitment can occur at any time during PIC assembly.

The protein localises to the cytoplasm. Functionally, one of the essential components for the initiation of protein synthesis. Stabilizes the binding of IF-2 and IF-3 on the 30S subunit to which N-formylmethionyl-tRNA(fMet) subsequently binds. Helps modulate mRNA selection, yielding the 30S pre-initiation complex (PIC). Upon addition of the 50S ribosomal subunit IF-1, IF-2 and IF-3 are released leaving the mature 70S translation initiation complex. This is Translation initiation factor IF-1 from Actinobacillus succinogenes (strain ATCC 55618 / DSM 22257 / CCUG 43843 / 130Z).